We begin with the raw amino-acid sequence, 197 residues long: ATP-dependent Clp protease proteolytic subunit 2 (197 aa).

S96 functions as the Nucleophile in the catalytic mechanism. Residue H121 is part of the active site.

It belongs to the peptidase S14 family. In terms of assembly, fourteen ClpP subunits assemble into 2 heptameric rings which stack back to back to give a disk-like structure with a central cavity, resembling the structure of eukaryotic proteasomes.

It is found in the cytoplasm. It carries out the reaction Hydrolysis of proteins to small peptides in the presence of ATP and magnesium. alpha-casein is the usual test substrate. In the absence of ATP, only oligopeptides shorter than five residues are hydrolyzed (such as succinyl-Leu-Tyr-|-NHMec, and Leu-Tyr-Leu-|-Tyr-Trp, in which cleavage of the -Tyr-|-Leu- and -Tyr-|-Trp bonds also occurs).. Functionally, cleaves peptides in various proteins in a process that requires ATP hydrolysis. Has a chymotrypsin-like activity. Plays a major role in the degradation of misfolded proteins. This chain is ATP-dependent Clp protease proteolytic subunit 2, found in Synechococcus sp. (strain CC9605).